The chain runs to 95 residues: UPF0473 protein ABC1595 (95 aa).

Belongs to the UPF0473 family.

This is UPF0473 protein ABC1595 from Shouchella clausii (strain KSM-K16) (Alkalihalobacillus clausii).